A 96-amino-acid chain; its full sequence is Putative defensin-like protein 263 (96 aa).

An N-terminal signal peptide occupies residues 1 to 26; it reads MEKTSLKLVFLFSLTVIALCLSLSAA. 4 disulfides stabilise this stretch: Cys48–Cys96, Cys67–Cys86, Cys73–Cys91, and Cys77–Cys93.

Belongs to the DEFL family.

Its subcellular location is the secreted. This chain is Putative defensin-like protein 263, found in Arabidopsis thaliana (Mouse-ear cress).